Reading from the N-terminus, the 121-residue chain is Large ribosomal subunit protein uL14 (121 aa).

Belongs to the universal ribosomal protein uL14 family. As to quaternary structure, part of the 50S ribosomal subunit. Forms a cluster with proteins L3 and L19. In the 70S ribosome, L14 and L19 interact and together make contacts with the 16S rRNA in bridges B5 and B8.

Its function is as follows. Binds to 23S rRNA. Forms part of two intersubunit bridges in the 70S ribosome. In Akkermansia muciniphila (strain ATCC BAA-835 / DSM 22959 / JCM 33894 / BCRC 81048 / CCUG 64013 / CIP 107961 / Muc), this protein is Large ribosomal subunit protein uL14.